The chain runs to 490 residues: Tryptophan decarboxylase (490 aa).

Residue Lys306 is modified to N6-(pyridoxal phosphate)lysine.

It belongs to the group II decarboxylase family. As to quaternary structure, homodimer. Requires pyridoxal 5'-phosphate as cofactor.

It localises to the cytoplasm. It catalyses the reaction L-tryptophan + H(+) = tryptamine + CO2. Its activity is regulated as follows. Inhibited by (S)-alpha-fluoromethyltryptophan. Functionally, catalyzes the decarboxylation of tryptophan to tryptamine. Tryptamine is a neurotransmitter that induces the release of serotonin, which is suggested to modulate gastrointestinal motility. Therefore, the tryptophan decarboxylase from the gut bacteria Ruminococcus gnavus (strain ATCC 29149 / VPI C7-9) may influence host brain and behavior. Has weak activity with tyrosine and phenylalanine. The sequence is that of Tryptophan decarboxylase from Mediterraneibacter gnavus (strain ATCC 29149 / DSM 114966 / JCM 6515 / VPI C7-9) (Ruminococcus gnavus).